Here is a 563-residue protein sequence, read N- to C-terminus: 2-isopropylmalate synthase (563 aa).

The Pyruvate carboxyltransferase domain maps to Pro31–Asn305. Mg(2+)-binding residues include Asp40, His244, His246, and Asn280. The interval Arg437–Glu563 is regulatory domain.

It belongs to the alpha-IPM synthase/homocitrate synthase family. LeuA type 2 subfamily. Homodimer. Requires Mg(2+) as cofactor.

The protein localises to the cytoplasm. It catalyses the reaction 3-methyl-2-oxobutanoate + acetyl-CoA + H2O = (2S)-2-isopropylmalate + CoA + H(+). Its pathway is amino-acid biosynthesis; L-leucine biosynthesis; L-leucine from 3-methyl-2-oxobutanoate: step 1/4. Functionally, catalyzes the condensation of the acetyl group of acetyl-CoA with 3-methyl-2-oxobutanoate (2-ketoisovalerate) to form 3-carboxy-3-hydroxy-4-methylpentanoate (2-isopropylmalate). The protein is 2-isopropylmalate synthase of Parvibaculum lavamentivorans (strain DS-1 / DSM 13023 / NCIMB 13966).